We begin with the raw amino-acid sequence, 468 residues long: MSFLSISRLAPRLLSSKNAACVVVAARNASASTNLKDVLSDLVPKEQSRIKNFKQQYGKTSIGQITVDMVYGGMRGVKGLVYETSVLDPDEGIRFRGYSIPECQQLLPKAPGGEEPLPEGLFWLLVTGQVPTEEQVSWLSKEWAKRAALPSHVVTMLDNFPTNLHPMSQFSAAITALNSESSFARAYSEGVNKAKYWEFVYEDSMDLIAKLPCVAAKIYRNLYREGSSIGAIDSNLDWSHNFTNMLGYTEPQFTELMRLYLTIHSDHEGGNVSAHTSHLVGSALSDPYLSFSAAMNGLAGPLHGLANQEVLVWLTALQKELGGEVSDEKMRDYIWNTLKSGRVVPGYGHAVLRKTDPRYTCQREFALKHLPNDPMFKLVAQLYKIVPNVLLEQGKAKNPWPNVDAHSGVLLQYYGMTEMNYYTVLFGVSRALGVLAQLVWSRALGFPLERPKSMSTDGLMALVGAKSG.

The transit peptide at 1-30 (MSFLSISRLAPRLLSSKNAACVVVAARNAS) directs the protein to the mitochondrion. Catalysis depends on residues H303 and H349. R358 contributes to the oxaloacetate binding site. D404 is a catalytic residue. The oxaloacetate site is built by R430 and R450.

Belongs to the citrate synthase family. As to quaternary structure, homodimer.

It is found in the mitochondrion matrix. It carries out the reaction oxaloacetate + acetyl-CoA + H2O = citrate + CoA + H(+). It participates in carbohydrate metabolism; tricarboxylic acid cycle; isocitrate from oxaloacetate: step 1/2. Its function is as follows. Key enzyme of the Krebs tricarboxylic acid cycle which catalyzes the synthesis of citrate from acetyl coenzyme A and oxaloacetate. The chain is Citrate synthase, mitochondrial (cs) from Danio rerio (Zebrafish).